We begin with the raw amino-acid sequence, 524 residues long: Citrate exporter 1 (524 aa).

The tract at residues 1–49 (MSSTTSSSRSDLEKVPVPQVTPRDSDSDKGSLSPEPSTLEAQSSEKPPH) is disordered. The segment covering 34 to 45 (PEPSTLEAQSSE) has biased composition (polar residues). A helical membrane pass occupies residues 60-80 (MVCIVSLAAIFSPLSSNIYFP). A glycan (N-linked (GlcNAc...) asparagine) is linked at N90. 5 helical membrane-spanning segments follow: residues 95-115 (LATL…SFWG), 125-145 (PVFI…AESK), 155-175 (ALQA…IGDI), 186-206 (GIFG…GGIF), and 215-235 (IFWF…VLLP). N244 carries an N-linked (GlcNAc...) asparagine glycan. The next 6 membrane-spanning stretches (helical) occupy residues 296–316 (VFIT…VTSS), 332–352 (IGLT…LVGY), 395–415 (TWWV…SLRT), 417–437 (LAVP…LFTI), 459–479 (LMRC…LDAL), and 481–501 (PDYT…LLYV).

The protein belongs to the major facilitator superfamily.

It is found in the cell membrane. It catalyses the reaction citrate(in) = citrate(out). Its function is as follows. Transmembrane transporter that exports citrate across the cell membrane. This chain is Citrate exporter 1, found in Aspergillus niger (strain ATCC 1015 / CBS 113.46 / FGSC A1144 / LSHB Ac4 / NCTC 3858a / NRRL 328 / USDA 3528.7).